A 430-amino-acid polypeptide reads, in one-letter code: Serine--tRNA ligase (430 aa).

231-233 (TSE) provides a ligand contact to L-serine. 262-264 (RSE) provides a ligand contact to ATP. Glu-285 serves as a coordination point for L-serine. Position 349–352 (349–352 (EISS)) interacts with ATP. Residue Ser-385 participates in L-serine binding.

The protein belongs to the class-II aminoacyl-tRNA synthetase family. Type-1 seryl-tRNA synthetase subfamily. As to quaternary structure, homodimer. The tRNA molecule binds across the dimer.

It is found in the cytoplasm. It catalyses the reaction tRNA(Ser) + L-serine + ATP = L-seryl-tRNA(Ser) + AMP + diphosphate + H(+). The enzyme catalyses tRNA(Sec) + L-serine + ATP = L-seryl-tRNA(Sec) + AMP + diphosphate + H(+). It participates in aminoacyl-tRNA biosynthesis; selenocysteinyl-tRNA(Sec) biosynthesis; L-seryl-tRNA(Sec) from L-serine and tRNA(Sec): step 1/1. Its function is as follows. Catalyzes the attachment of serine to tRNA(Ser). Is also able to aminoacylate tRNA(Sec) with serine, to form the misacylated tRNA L-seryl-tRNA(Sec), which will be further converted into selenocysteinyl-tRNA(Sec). The protein is Serine--tRNA ligase of Roseobacter denitrificans (strain ATCC 33942 / OCh 114) (Erythrobacter sp. (strain OCh 114)).